Here is a 421-residue protein sequence, read N- to C-terminus: Gamma-glutamyl phosphate reductase (421 aa).

Belongs to the gamma-glutamyl phosphate reductase family.

The protein resides in the cytoplasm. The enzyme catalyses L-glutamate 5-semialdehyde + phosphate + NADP(+) = L-glutamyl 5-phosphate + NADPH + H(+). It participates in amino-acid biosynthesis; L-proline biosynthesis; L-glutamate 5-semialdehyde from L-glutamate: step 2/2. Its function is as follows. Catalyzes the NADPH-dependent reduction of L-glutamate 5-phosphate into L-glutamate 5-semialdehyde and phosphate. The product spontaneously undergoes cyclization to form 1-pyrroline-5-carboxylate. The polypeptide is Gamma-glutamyl phosphate reductase (Ruegeria sp. (strain TM1040) (Silicibacter sp.)).